We begin with the raw amino-acid sequence, 665 residues long: Potassium-transporting ATPase ATP-binding subunit (665 aa).

The next 4 helical transmembrane spans lie at 28–48, 56–76, 207–227, and 244–264; these read MFLTEMSLFLSVFIYAFPGFF, YLQFYLAVVILLFLTVFFSSM, IALTVFLSGLTLIFLIITASI, and IVLLIALIPTTIGALLPAIGI. The active-site 4-aspartylphosphate intermediate is the aspartate 295. ATP-binding positions include aspartate 332, glutamate 336, 364 to 371, and lysine 382; that span reads FSSETKYS. Residues aspartate 501 and aspartate 505 each contribute to the Mg(2+) site. 3 helical membrane passes run 570–590, 596–616, and 644–664; these read YFVIIPAIFYMFPSLSMVNVL, IVAVTSALIFNTIIIVFLIPL, and VVVPFIAIKLIYMLLVALGVV.

It belongs to the cation transport ATPase (P-type) (TC 3.A.3) family. Type IA subfamily. The system is composed of three essential subunits: KdpA, KdpB and KdpC.

It localises to the cell membrane. It catalyses the reaction K(+)(out) + ATP + H2O = K(+)(in) + ADP + phosphate + H(+). Part of the high-affinity ATP-driven potassium transport (or Kdp) system, which catalyzes the hydrolysis of ATP coupled with the electrogenic transport of potassium into the cytoplasm. This subunit is responsible for energy coupling to the transport system and for the release of the potassium ions to the cytoplasm. This chain is Potassium-transporting ATPase ATP-binding subunit, found in Thermoplasma acidophilum (strain ATCC 25905 / DSM 1728 / JCM 9062 / NBRC 15155 / AMRC-C165).